We begin with the raw amino-acid sequence, 56 residues long: Ovomucoid (56 aa).

The 51-residue stretch at 6-56 (VDCSEYPKPACTLEYRPLCGSDNKTYGNKCNFCNAVVESNGTLTLSHFGKC) folds into the Kazal-like domain. 3 disulfides stabilise this stretch: Cys-8–Cys-38, Cys-16–Cys-35, and Cys-24–Cys-56. Asn-45 carries an N-linked (GlcNAc...) asparagine glycan.

Its subcellular location is the secreted. The sequence is that of Ovomucoid from Meleagris ocellata (Ocellated turkey).